We begin with the raw amino-acid sequence, 953 residues long: Xylosyltransferase 1 (953 aa).

At 1–17 the chain is on the cytoplasmic side; it reads MVAAPCARRLARRSHSA. A helical; Signal-anchor for type II membrane protein membrane pass occupies residues 18-38; it reads LLAALMVLLLHTLVVWNFSSL. At 39 to 953 the chain is on the lumenal side; that stretch reads DSGAGEQRRA…GAVKPDGRLR (915 aa). Positions 48–62 are enriched in low complexity; the sequence is AGAAAGAAEQQQPAA. Disordered stretches follow at residues 48–67 and 74–251; these read AGAAAGAAEQQQPAAPRRER and LPAA…APKC. Over residues 79–97 the composition is skewed to gly residues; the sequence is GGPGGRAGGGGARGGGPGG. A compositionally biased stretch (basic and acidic residues) spans 138–154; it reads KVRTDSNNENSVPKDFE. Polar residues predominate over residues 156-165; that stretch reads VDNSNFAPRT. 2 stretches are compositionally biased toward basic and acidic residues: residues 170 to 197 and 205 to 216; these read HQPELAKKPPSRQKEHLQRKLDALDKRQ and GPKEVLPPREKA. N-linked (GlcNAc...) asparagine glycosylation is present at Asn-219. Intrachain disulfides connect Cys-251–Cys-279, Cys-295–Cys-536, Cys-555–Cys-568, and Cys-557–Cys-566. UDP-alpha-D-xylose contacts are provided by residues Val-327, Asp-355, and 384 to 386; that span reads TIW. A glycan (N-linked (GlcNAc...) asparagine) is linked at Asn-415. 488 to 489 serves as a coordination point for UDP-alpha-D-xylose; the sequence is DW. Residues Ser-569 and 592-593 each bind UDP-alpha-D-xylose; that span reads RK. Cystine bridges form between Cys-669-Cys-921 and Cys-914-Cys-927. N-linked (GlcNAc...) asparagine glycosylation occurs at Asn-771. The segment at 933–953 is disordered; sequence SSFSPDPKSELGAVKPDGRLR.

The protein belongs to the glycosyltransferase 14 family. XylT subfamily. In terms of assembly, monomer. It depends on a divalent metal cation as a cofactor. In terms of processing, contains 7 disulfide bonds. Post-translationally, N-glycosylated. In terms of tissue distribution, detected in brain, spleen, kidney and testis, and at low levels in skeletal muscle.

The protein resides in the golgi apparatus membrane. The enzyme catalyses UDP-alpha-D-xylose + L-seryl-[protein] = 3-O-(beta-D-xylosyl)-L-seryl-[protein] + UDP + H(+). The protein operates within glycan metabolism; chondroitin sulfate biosynthesis. It functions in the pathway glycan metabolism; heparan sulfate biosynthesis. Functionally, catalyzes the first step in the biosynthesis of chondroitin sulfate and dermatan sulfate proteoglycans, such as DCN. Transfers D-xylose from UDP-D-xylose to specific serine residues of the core protein. Required for normal maturation of chondrocytes during bone development, normal onset of ossification and normal embryonic and postnatal skeleton development, especially of the long bones. The chain is Xylosyltransferase 1 (Xylt1) from Mus musculus (Mouse).